The sequence spans 550 residues: Arginine--tRNA ligase (550 aa).

The short motif at 130-140 (ANPTGPIHIGG) is the 'HIGH' region element.

Belongs to the class-I aminoacyl-tRNA synthetase family. Monomer.

Its subcellular location is the cytoplasm. The catalysed reaction is tRNA(Arg) + L-arginine + ATP = L-arginyl-tRNA(Arg) + AMP + diphosphate. This chain is Arginine--tRNA ligase, found in Mycobacterium sp. (strain JLS).